The sequence spans 491 residues: Glucose-6-phosphate 1-dehydrogenase (491 aa).

Residues arginine 50, 92–93, and lysine 147 contribute to the NADP(+) site; that span reads DV. Substrate-binding residues include histidine 177, lysine 181, glutamate 215, and aspartate 234. Histidine 239 serves as the catalytic Proton acceptor. Residues lysine 339 and lysine 344 each coordinate substrate.

It belongs to the glucose-6-phosphate dehydrogenase family.

The enzyme catalyses D-glucose 6-phosphate + NADP(+) = 6-phospho-D-glucono-1,5-lactone + NADPH + H(+). The protein operates within carbohydrate degradation; pentose phosphate pathway; D-ribulose 5-phosphate from D-glucose 6-phosphate (oxidative stage): step 1/3. Functionally, catalyzes the oxidation of glucose 6-phosphate to 6-phosphogluconolactone. The protein is Glucose-6-phosphate 1-dehydrogenase of Dickeya dadantii (strain 3937) (Erwinia chrysanthemi (strain 3937)).